Here is a 101-residue protein sequence, read N- to C-terminus: Small ribosomal subunit protein uS14 (101 aa).

This sequence belongs to the universal ribosomal protein uS14 family. In terms of assembly, part of the 30S ribosomal subunit. Contacts proteins S3 and S10.

In terms of biological role, binds 16S rRNA, required for the assembly of 30S particles and may also be responsible for determining the conformation of the 16S rRNA at the A site. The protein is Small ribosomal subunit protein uS14 of Salmonella paratyphi A (strain ATCC 9150 / SARB42).